Consider the following 314-residue polypeptide: Acetyl-coenzyme A carboxylase carboxyl transferase subunit alpha (314 aa).

Residues 32 to 289 enclose the CoA carboxyltransferase C-terminal domain; the sequence is EIDMLEASLK…KKMFLKHLNE (258 aa).

It belongs to the AccA family. As to quaternary structure, acetyl-CoA carboxylase is a heterohexamer composed of biotin carboxyl carrier protein (AccB), biotin carboxylase (AccC) and two subunits each of ACCase subunit alpha (AccA) and ACCase subunit beta (AccD).

The protein localises to the cytoplasm. The enzyme catalyses N(6)-carboxybiotinyl-L-lysyl-[protein] + acetyl-CoA = N(6)-biotinyl-L-lysyl-[protein] + malonyl-CoA. It participates in lipid metabolism; malonyl-CoA biosynthesis; malonyl-CoA from acetyl-CoA: step 1/1. Component of the acetyl coenzyme A carboxylase (ACC) complex. First, biotin carboxylase catalyzes the carboxylation of biotin on its carrier protein (BCCP) and then the CO(2) group is transferred by the carboxyltransferase to acetyl-CoA to form malonyl-CoA. The chain is Acetyl-coenzyme A carboxylase carboxyl transferase subunit alpha from Staphylococcus epidermidis (strain ATCC 12228 / FDA PCI 1200).